The primary structure comprises 133 residues: ATP synthase epsilon chain (133 aa).

The protein belongs to the ATPase epsilon chain family. As to quaternary structure, F-type ATPases have 2 components, CF(1) - the catalytic core - and CF(0) - the membrane proton channel. CF(1) has five subunits: alpha(3), beta(3), gamma(1), delta(1), epsilon(1). CF(0) has three main subunits: a, b and c.

It is found in the cell membrane. Functionally, produces ATP from ADP in the presence of a proton gradient across the membrane. The polypeptide is ATP synthase epsilon chain (Clostridium botulinum (strain 657 / Type Ba4)).